The following is a 201-amino-acid chain: Recombination protein RecR (201 aa).

The C4-type zinc-finger motif lies at 60 to 75; sequence CSTCGNVDTADPCMIC. The Toprim domain occupies 83–178; it reads GTIIVVEDVS…KVTRLAHGVP (96 aa).

It belongs to the RecR family.

Its function is as follows. May play a role in DNA repair. It seems to be involved in an RecBC-independent recombinational process of DNA repair. It may act with RecF and RecO. The sequence is that of Recombination protein RecR from Mesorhizobium japonicum (strain LMG 29417 / CECT 9101 / MAFF 303099) (Mesorhizobium loti (strain MAFF 303099)).